The chain runs to 957 residues: Retinoblastoma-related protein 1 (957 aa).

The segment at 369-569 (TPVSTAMTTA…EKGSSMYNSL (201 aa)) is domain A. Positions 369-808 (TPVSTAMTTA…NEVFIPTVKP (440 aa)) are pocket. The interval 570-677 (IVARPTLSAE…PAAGGETCAE (108 aa)) is spacer. Positions 678–808 (TGIGVFLSKI…NEVFIPTVKP (131 aa)) are domain B. A disordered region spans residues 814-854 (GPGTSPNRNNEPKSGGDAASFPESPRLSRFPNLPDMSPKKV).

This sequence belongs to the retinoblastoma protein (RB) family.

The protein resides in the nucleus. In terms of biological role, regulator of biological processes that recruits a histone deacetylase to control gene transcription. May play a role in the entry into mitosis, negatively regulating the cell proliferation. Formation of stable complexes with geminiviridae replication-associated proteins may create a cellular environment which favors viral DNA replication. This Triticum aestivum (Wheat) protein is Retinoblastoma-related protein 1 (RBR1).